The following is a 982-amino-acid chain: Glycine dehydrogenase (decarboxylating) (982 aa).

Position 729 is an N6-(pyridoxal phosphate)lysine (lysine 729).

This sequence belongs to the GcvP family. As to quaternary structure, the glycine cleavage system is composed of four proteins: P, T, L and H. It depends on pyridoxal 5'-phosphate as a cofactor.

It catalyses the reaction N(6)-[(R)-lipoyl]-L-lysyl-[glycine-cleavage complex H protein] + glycine + H(+) = N(6)-[(R)-S(8)-aminomethyldihydrolipoyl]-L-lysyl-[glycine-cleavage complex H protein] + CO2. Functionally, the glycine cleavage system catalyzes the degradation of glycine. The P protein binds the alpha-amino group of glycine through its pyridoxal phosphate cofactor; CO(2) is released and the remaining methylamine moiety is then transferred to the lipoamide cofactor of the H protein. The chain is Glycine dehydrogenase (decarboxylating) from Ralstonia nicotianae (strain ATCC BAA-1114 / GMI1000) (Ralstonia solanacearum).